The following is a 223-amino-acid chain: MDLASLRAQQIELASSVCREDRLDKDPPAFIGGADVGFEQGGEVTRAAMVLLKYPSLELVEYKVARIATTMPYIPGFLSFREYPALLAAWEQLSQKPDLLFVDGHGISHPRRLGVASHFGLLVDVPTIGVAKKRLCGKFEPLSTEPGALSPLMDKGEQLAWVWRSKARCNPLFIATGHRVSTDSALAWVQRCMKGYRLPEPTRWADAVASGRPAFIRWQEIQR.

Mg(2+) contacts are provided by Asp-35 and Asp-103.

This sequence belongs to the endonuclease V family. It depends on Mg(2+) as a cofactor.

It is found in the cytoplasm. It carries out the reaction Endonucleolytic cleavage at apurinic or apyrimidinic sites to products with a 5'-phosphate.. In terms of biological role, DNA repair enzyme involved in the repair of deaminated bases. Selectively cleaves double-stranded DNA at the second phosphodiester bond 3' to a deoxyinosine leaving behind the intact lesion on the nicked DNA. The protein is Endonuclease V of Salmonella schwarzengrund (strain CVM19633).